Here is a 202-residue protein sequence, read N- to C-terminus: MARYRGAKLRITRRLGDLPGLTSKIAKRTSRPGQHGAVQKKPTQYGIRLEEKQKLRFNYGISEKQLMNYIRQAKGIKGTTGTILLQLLEMRLDNLIFRLGLAPTIAAARQLVSHKHIQVNNTRVSIPSYQCQPGDVLSVRDNAASKSLVNTYLESPSLSQSPQHLDFDKKNLTAKVLGIVDREWVALKLNELFVIEYYSRKI.

The 63-residue stretch at 90-152 (MRLDNLIFRL…AASKSLVNTY (63 aa)) folds into the S4 RNA-binding domain.

It belongs to the universal ribosomal protein uS4 family. In terms of assembly, part of the 30S ribosomal subunit. Contacts protein S5. The interaction surface between S4 and S5 is involved in control of translational fidelity.

The protein localises to the plastid. It localises to the chloroplast. Its function is as follows. One of the primary rRNA binding proteins, it binds directly to 16S rRNA where it nucleates assembly of the body of the 30S subunit. In terms of biological role, with S5 and S12 plays an important role in translational accuracy. This chain is Small ribosomal subunit protein uS4c (rps4), found in Emiliania huxleyi (Coccolithophore).